The primary structure comprises 162 residues: Nucleotide-binding protein Franean1_6074 (162 aa).

It belongs to the YajQ family.

In terms of biological role, nucleotide-binding protein. This chain is Nucleotide-binding protein Franean1_6074, found in Parafrankia sp. (strain EAN1pec).